Consider the following 454-residue polypeptide: CCA-adding enzyme (454 aa).

ATP contacts are provided by S51 and K54. 2 residues coordinate CTP: S51 and K54. Mg(2+) contacts are provided by D63, D65, and D118. Residues H141, K161, and Y170 each coordinate ATP. The CTP site is built by H141, K161, and Y170.

This sequence belongs to the tRNA nucleotidyltransferase/poly(A) polymerase family. Archaeal CCA-adding enzyme subfamily. As to quaternary structure, homodimer. The cofactor is Mg(2+).

The enzyme catalyses a tRNA precursor + 2 CTP + ATP = a tRNA with a 3' CCA end + 3 diphosphate. It catalyses the reaction a tRNA with a 3' CCA end + 2 CTP + ATP = a tRNA with a 3' CCACCA end + 3 diphosphate. In terms of biological role, catalyzes the addition and repair of the essential 3'-terminal CCA sequence in tRNAs without using a nucleic acid template. Adds these three nucleotides in the order of C, C, and A to the tRNA nucleotide-73, using CTP and ATP as substrates and producing inorganic pyrophosphate. tRNA 3'-terminal CCA addition is required both for tRNA processing and repair. Also involved in tRNA surveillance by mediating tandem CCA addition to generate a CCACCA at the 3' terminus of unstable tRNAs. While stable tRNAs receive only 3'-terminal CCA, unstable tRNAs are marked with CCACCA and rapidly degraded. This is CCA-adding enzyme from Methanothermobacter thermautotrophicus (strain ATCC 29096 / DSM 1053 / JCM 10044 / NBRC 100330 / Delta H) (Methanobacterium thermoautotrophicum).